Reading from the N-terminus, the 767-residue chain is 5-methyltetrahydropteroyltriglutamate--homocysteine methyltransferase (767 aa).

5-methyltetrahydropteroyltri-L-glutamate contacts are provided by residues 17–20 and Lys-117; that span reads RELK. L-homocysteine-binding positions include 441-443 and Glu-494; that span reads IGS. Residues 441–443 and Glu-494 each bind L-methionine; that span reads IGS. Residues 525-526 and Trp-571 each bind 5-methyltetrahydropteroyltri-L-glutamate; that span reads RC. Residue Asp-609 participates in L-homocysteine binding. Asp-609 provides a ligand contact to L-methionine. Residue Glu-615 coordinates 5-methyltetrahydropteroyltri-L-glutamate. His-652, Cys-654, and Glu-676 together coordinate Zn(2+). His-705 acts as the Proton donor in catalysis. Residue Cys-737 participates in Zn(2+) binding.

The protein belongs to the vitamin-B12 independent methionine synthase family. Zn(2+) serves as cofactor.

The enzyme catalyses 5-methyltetrahydropteroyltri-L-glutamate + L-homocysteine = tetrahydropteroyltri-L-glutamate + L-methionine. The protein operates within amino-acid biosynthesis; L-methionine biosynthesis via de novo pathway; L-methionine from L-homocysteine (MetE route): step 1/1. Its function is as follows. Catalyzes the transfer of a methyl group from 5-methyltetrahydrofolate to homocysteine resulting in methionine formation. The protein is 5-methyltetrahydropteroyltriglutamate--homocysteine methyltransferase of Bifidobacterium longum subsp. infantis (strain ATCC 15697 / DSM 20088 / JCM 1222 / NCTC 11817 / S12).